The following is a 480-amino-acid chain: tRNA-2-methylthio-N(6)-dimethylallyladenosine synthase (480 aa).

The 121-residue stretch at 25 to 145 folds into the MTTase N-terminal domain; the sequence is GVFYVHTLGC…LPQLLDQARI (121 aa). [4Fe-4S] cluster-binding residues include Cys34, Cys74, Cys108, Cys182, Cys186, and Cys189. A Radical SAM core domain is found at 168–397; it reads RASKVSSWVA…VALQERITEE (230 aa). The TRAM domain maps to 400–470; it reads KTFEGRDVEV…RHNLIADPNP (71 aa).

Belongs to the methylthiotransferase family. MiaB subfamily. Monomer. [4Fe-4S] cluster is required as a cofactor.

The protein resides in the cytoplasm. It carries out the reaction N(6)-dimethylallyladenosine(37) in tRNA + (sulfur carrier)-SH + AH2 + 2 S-adenosyl-L-methionine = 2-methylsulfanyl-N(6)-dimethylallyladenosine(37) in tRNA + (sulfur carrier)-H + 5'-deoxyadenosine + L-methionine + A + S-adenosyl-L-homocysteine + 2 H(+). In terms of biological role, catalyzes the methylthiolation of N6-(dimethylallyl)adenosine (i(6)A), leading to the formation of 2-methylthio-N6-(dimethylallyl)adenosine (ms(2)i(6)A) at position 37 in tRNAs that read codons beginning with uridine. The chain is tRNA-2-methylthio-N(6)-dimethylallyladenosine synthase from Bifidobacterium adolescentis (strain ATCC 15703 / DSM 20083 / NCTC 11814 / E194a).